A 449-amino-acid chain; its full sequence is Glucose-6-phosphate isomerase (449 aa).

The active-site Proton donor is the Glu-290. Active-site residues include His-311 and Lys-425.

Belongs to the GPI family.

The protein resides in the cytoplasm. The catalysed reaction is alpha-D-glucose 6-phosphate = beta-D-fructose 6-phosphate. The protein operates within carbohydrate biosynthesis; gluconeogenesis. It participates in carbohydrate degradation; glycolysis; D-glyceraldehyde 3-phosphate and glycerone phosphate from D-glucose: step 2/4. Catalyzes the reversible isomerization of glucose-6-phosphate to fructose-6-phosphate. The polypeptide is Glucose-6-phosphate isomerase (Clostridioides difficile (strain 630) (Peptoclostridium difficile)).